The sequence spans 701 residues: DNA ligase (701 aa).

NAD(+)-binding positions include 43-47 (DAAYD), 92-93 (SL), and Glu126. The active-site N6-AMP-lysine intermediate is Lys128. Residues Arg149, Glu186, Lys302, and Lys326 each coordinate NAD(+). Positions 420, 423, 444, and 450 each coordinate Zn(2+). The 79-residue stretch at 623 to 701 (ANDSPVAGKT…EDEWFDLIGA (79 aa)) folds into the BRCT domain.

It belongs to the NAD-dependent DNA ligase family. LigA subfamily. Requires Mg(2+) as cofactor. It depends on Mn(2+) as a cofactor.

It catalyses the reaction NAD(+) + (deoxyribonucleotide)n-3'-hydroxyl + 5'-phospho-(deoxyribonucleotide)m = (deoxyribonucleotide)n+m + AMP + beta-nicotinamide D-nucleotide.. DNA ligase that catalyzes the formation of phosphodiester linkages between 5'-phosphoryl and 3'-hydroxyl groups in double-stranded DNA using NAD as a coenzyme and as the energy source for the reaction. It is essential for DNA replication and repair of damaged DNA. This is DNA ligase from Maricaulis maris (strain MCS10) (Caulobacter maris).